The primary structure comprises 245 residues: tRNA pseudouridine synthase A 2 (245 aa).

Asp53 acts as the Nucleophile in catalysis. Tyr111 lines the substrate pocket.

This sequence belongs to the tRNA pseudouridine synthase TruA family. As to quaternary structure, homodimer.

The enzyme catalyses uridine(38/39/40) in tRNA = pseudouridine(38/39/40) in tRNA. In terms of biological role, formation of pseudouridine at positions 38, 39 and 40 in the anticodon stem and loop of transfer RNAs. This chain is tRNA pseudouridine synthase A 2, found in Bacillus cereus (strain ATCC 14579 / DSM 31 / CCUG 7414 / JCM 2152 / NBRC 15305 / NCIMB 9373 / NCTC 2599 / NRRL B-3711).